The following is a 338-amino-acid chain: Holliday junction branch migration complex subunit RuvB (338 aa).

Residues 4–184 form a large ATPase domain (RuvB-L) region; it reads SDRLVSGKAR…FGISHHLQYY (181 aa). ATP-binding positions include Arg24, Gly65, Lys68, Thr69, Thr70, 131–133, Arg174, Tyr184, and Arg221; that span reads EDY. Thr69 is a Mg(2+) binding site. Residues 185 to 255 form a small ATPAse domain (RuvB-S) region; that stretch reads HHDELTQIVM…LADEALELLA (71 aa). Positions 258 to 338 are head domain (RuvB-H); that stretch reads HLGFDALDRR…NIEVPDGRNS (81 aa). The DNA site is built by Arg294, Arg313, and Arg318.

It belongs to the RuvB family. As to quaternary structure, homohexamer. Forms an RuvA(8)-RuvB(12)-Holliday junction (HJ) complex. HJ DNA is sandwiched between 2 RuvA tetramers; dsDNA enters through RuvA and exits via RuvB. An RuvB hexamer assembles on each DNA strand where it exits the tetramer. Each RuvB hexamer is contacted by two RuvA subunits (via domain III) on 2 adjacent RuvB subunits; this complex drives branch migration. In the full resolvosome a probable DNA-RuvA(4)-RuvB(12)-RuvC(2) complex forms which resolves the HJ.

The protein resides in the cytoplasm. The enzyme catalyses ATP + H2O = ADP + phosphate + H(+). Its function is as follows. The RuvA-RuvB-RuvC complex processes Holliday junction (HJ) DNA during genetic recombination and DNA repair, while the RuvA-RuvB complex plays an important role in the rescue of blocked DNA replication forks via replication fork reversal (RFR). RuvA specifically binds to HJ cruciform DNA, conferring on it an open structure. The RuvB hexamer acts as an ATP-dependent pump, pulling dsDNA into and through the RuvAB complex. RuvB forms 2 homohexamers on either side of HJ DNA bound by 1 or 2 RuvA tetramers; 4 subunits per hexamer contact DNA at a time. Coordinated motions by a converter formed by DNA-disengaged RuvB subunits stimulates ATP hydrolysis and nucleotide exchange. Immobilization of the converter enables RuvB to convert the ATP-contained energy into a lever motion, pulling 2 nucleotides of DNA out of the RuvA tetramer per ATP hydrolyzed, thus driving DNA branch migration. The RuvB motors rotate together with the DNA substrate, which together with the progressing nucleotide cycle form the mechanistic basis for DNA recombination by continuous HJ branch migration. Branch migration allows RuvC to scan DNA until it finds its consensus sequence, where it cleaves and resolves cruciform DNA. This chain is Holliday junction branch migration complex subunit RuvB, found in Dichelobacter nodosus (strain VCS1703A).